An 804-amino-acid polypeptide reads, in one-letter code: Phenylalanine--tRNA ligase beta subunit (804 aa).

A tRNA-binding domain is found at 38 to 148 (RSYLKGFVIA…EDVPIGASFA (111 aa)). The B5 domain maps to 401 to 476 (PEIRQITFPL…RIYGLDKIKP (76 aa)). Mg(2+)-binding residues include Asp-454, Asp-460, Glu-463, and Glu-464. Residues 710–803 (SSLQMVRRDF…VTRMTGASLR (94 aa)) enclose the FDX-ACB domain.

It belongs to the phenylalanyl-tRNA synthetase beta subunit family. Type 1 subfamily. Tetramer of two alpha and two beta subunits. It depends on Mg(2+) as a cofactor.

Its subcellular location is the cytoplasm. The enzyme catalyses tRNA(Phe) + L-phenylalanine + ATP = L-phenylalanyl-tRNA(Phe) + AMP + diphosphate + H(+). The polypeptide is Phenylalanine--tRNA ligase beta subunit (Bartonella henselae (strain ATCC 49882 / DSM 28221 / CCUG 30454 / Houston 1) (Rochalimaea henselae)).